A 513-amino-acid chain; its full sequence is Maturase K (513 aa).

The protein belongs to the intron maturase 2 family. MatK subfamily.

The protein localises to the plastid. The protein resides in the chloroplast. Usually encoded in the trnK tRNA gene intron. Probably assists in splicing its own and other chloroplast group II introns. This is Maturase K from Sporobolus michauxianus (Prairie cordgrass).